The following is a 216-amino-acid chain: SYKVSGGLLRVGVSVVNALSKKLHLTIHRAGQIHEQEYAHGDPQYPLKVVGETDTSGTTVRFWPSEWTFSQTIFSVDILARRLRELSFLNAGVRIVLRDERVNLEHIYDYEVGLSEKSALDIAGLPGKLADCQEKDPALSELYLVEGDSAGGSAKQGRNRKMQAILPLKGKILNVERARFDKMISSQEVGTLITALGCGIGREEYNPDKLRYHKII.

Residues Ser140 to Ile216 enclose the Toprim domain.

It belongs to the type II topoisomerase GyrB family. In terms of assembly, heterotetramer, composed of two GyrA and two GyrB chains. In the heterotetramer, GyrA contains the active site tyrosine that forms a transient covalent intermediate with DNA, while GyrB binds cofactors and catalyzes ATP hydrolysis.

The protein localises to the cytoplasm. It carries out the reaction ATP-dependent breakage, passage and rejoining of double-stranded DNA.. Functionally, a type II topoisomerase that negatively supercoils closed circular double-stranded (ds) DNA in an ATP-dependent manner to modulate DNA topology and maintain chromosomes in an underwound state. Negative supercoiling favors strand separation, and DNA replication, transcription, recombination and repair, all of which involve strand separation. Also able to catalyze the interconversion of other topological isomers of dsDNA rings, including catenanes and knotted rings. Type II topoisomerases break and join 2 DNA strands simultaneously in an ATP-dependent manner. This is DNA gyrase subunit B (gyrB) from Acinetobacter sp. (strain T4).